The primary structure comprises 435 residues: Tol-Pal system protein TolB (435 aa).

Residues 1–20 form the signal peptide; it reads MRKIIAGVFIFVFLISNLYA.

It belongs to the TolB family. The Tol-Pal system is composed of five core proteins: the inner membrane proteins TolA, TolQ and TolR, the periplasmic protein TolB and the outer membrane protein Pal. They form a network linking the inner and outer membranes and the peptidoglycan layer.

The protein resides in the periplasm. Its function is as follows. Part of the Tol-Pal system, which plays a role in outer membrane invagination during cell division and is important for maintaining outer membrane integrity. The chain is Tol-Pal system protein TolB from Francisella tularensis subsp. tularensis (strain WY96-3418).